The chain runs to 134 residues: Small ribosomal subunit protein bS16 (134 aa).

Residues 105 to 134 form a disordered region; it reads EAERRQKRLTAKTRRRQAKKAAEAAGSAEG. Positions 109-123 are enriched in basic residues; the sequence is RQKRLTAKTRRRQAK.

It belongs to the bacterial ribosomal protein bS16 family.

In Chlorobaculum parvum (strain DSM 263 / NCIMB 8327) (Chlorobium vibrioforme subsp. thiosulfatophilum), this protein is Small ribosomal subunit protein bS16.